A 366-amino-acid chain; its full sequence is Cyanide hydratase (366 aa).

A CN hydrolase domain is found at 6–285 (YKAAAVTSEP…DGLMFVDIDL (280 aa)). Residue Glu46 is the Proton acceptor of the active site. Lys128 is an active-site residue. The active-site Nucleophile is the Cys163.

The protein belongs to the carbon-nitrogen hydrolase superfamily. Nitrilase family. As to quaternary structure, oligomer of dimers, forming left-handed helical fibers.

It catalyses the reaction formamide = hydrogen cyanide + H2O. Its function is as follows. Catalyzes the hydration of cyanide to formamide. Degradation of cyanide may be important for plant pathogenic fungi in infection of cyanogenic plants. Can also transform some nitriles like 2-cyanopyridine and fumaronitrile. This Pyrenophora teres f. teres (strain 0-1) (Barley net blotch fungus) protein is Cyanide hydratase.